Reading from the N-terminus, the 1520-residue chain is Glutamate synthase [NADPH] large chain (1520 aa).

The For GATase activity role is filled by Cys-22. The Glutamine amidotransferase type-2 domain occupies 22 to 415 (CGIGLYAHLK…PGKMLLIDLE (394 aa)). Residues 890–913 (GGKSNSGEGGEDPKRFVPDENGDD) form a disordered region. Residues 900–913 (EDPKRFVPDENGDD) show a composition bias toward basic and acidic residues. 1060-1112 (LAEAHQTLMLNGLRDRVVLETDGKLMTGRDVVMAALLGAEEFGFATAPLVVLG) provides a ligand contact to FMN. Residues Cys-1113, Cys-1119, and Cys-1124 each contribute to the [3Fe-4S] cluster site.

This sequence belongs to the glutamate synthase family. In terms of assembly, aggregate of 4 catalytic active heterodimers, consisting of a large and a small subunit. It depends on [3Fe-4S] cluster as a cofactor. FAD serves as cofactor. The cofactor is FMN.

The catalysed reaction is 2 L-glutamate + NADP(+) = L-glutamine + 2-oxoglutarate + NADPH + H(+). It functions in the pathway amino-acid biosynthesis; L-glutamate biosynthesis via GLT pathway; L-glutamate from 2-oxoglutarate and L-glutamine (NADP(+) route): step 1/1. It participates in energy metabolism; nitrogen metabolism. The chain is Glutamate synthase [NADPH] large chain (gltA) from Bacillus subtilis (strain 168).